The primary structure comprises 323 residues: MVTILDRTKPDDKRIRHPEKAHKPDTEVLRKPEWIRVKAPTSKGYQETRELVRSHKLVTVCEEAGCPNIGECWEKKHATFMIMGEICTRACAFCNVATGKPNALDREEPANVAKAVRQMGLSHVVITSVDRDDLADGGAEHFEQVIWAIREASPATTIEILTPDFLKKPGALERVVAAKPDVFNHNMETVPGNYLTVRPGARYFHSVRLLQRVKELDPTMFTKSGIMVGLGEERNEVLQLMDDLRTADVDFLTIGQYLQPTRKHHKVERFVTPEEFKSYEDIAYTKGFLMVASSPLTRSSHHAGDDFARLKANREKKLLAAAE.

Positions 1 to 14 are enriched in basic and acidic residues; the sequence is MVTILDRTKPDDKR. The interval 1–25 is disordered; the sequence is MVTILDRTKPDDKRIRHPEKAHKPD. Residues Cys-61, Cys-66, Cys-72, Cys-87, Cys-91, Cys-94, and Ser-300 each contribute to the [4Fe-4S] cluster site. The Radical SAM core domain occupies 73–289; it reads WEKKHATFMI…EDIAYTKGFL (217 aa).

It belongs to the radical SAM superfamily. Lipoyl synthase family. [4Fe-4S] cluster is required as a cofactor.

The protein localises to the cytoplasm. It catalyses the reaction [[Fe-S] cluster scaffold protein carrying a second [4Fe-4S](2+) cluster] + N(6)-octanoyl-L-lysyl-[protein] + 2 oxidized [2Fe-2S]-[ferredoxin] + 2 S-adenosyl-L-methionine + 4 H(+) = [[Fe-S] cluster scaffold protein] + N(6)-[(R)-dihydrolipoyl]-L-lysyl-[protein] + 4 Fe(3+) + 2 hydrogen sulfide + 2 5'-deoxyadenosine + 2 L-methionine + 2 reduced [2Fe-2S]-[ferredoxin]. Its pathway is protein modification; protein lipoylation via endogenous pathway; protein N(6)-(lipoyl)lysine from octanoyl-[acyl-carrier-protein]: step 2/2. Catalyzes the radical-mediated insertion of two sulfur atoms into the C-6 and C-8 positions of the octanoyl moiety bound to the lipoyl domains of lipoate-dependent enzymes, thereby converting the octanoylated domains into lipoylated derivatives. This is Lipoyl synthase from Allorhizobium ampelinum (strain ATCC BAA-846 / DSM 112012 / S4) (Agrobacterium vitis (strain S4)).